Here is a 386-residue protein sequence, read N- to C-terminus: 2,3-diketo-5-methylthiopentyl-1-phosphate enolase (386 aa).

Lysine 85 functions as the Proton acceptor in the catalytic mechanism. Substrate contacts are provided by residues lysine 131, 157-160, histidine 248, glycine 316, and 338-339; these read KDDE and GT. 3 residues coordinate Mg(2+): lysine 157, aspartate 159, and glutamate 160. An N6-carboxylysine modification is found at lysine 157.

This sequence belongs to the RuBisCO large chain family. Type IV subfamily. Homodimer. Mg(2+) serves as cofactor.

It catalyses the reaction 5-methylsulfanyl-2,3-dioxopentyl phosphate = 2-hydroxy-5-methylsulfanyl-3-oxopent-1-enyl phosphate. It participates in amino-acid biosynthesis; L-methionine biosynthesis via salvage pathway; L-methionine from S-methyl-5-thio-alpha-D-ribose 1-phosphate: step 3/6. In terms of biological role, catalyzes the enolization of 2,3-diketo-5-methylthiopentyl-1-phosphate (DK-MTP-1-P) into 2-hydroxy-3-keto-5-methylthiopentenyl-1-phosphate (HK-MTPenyl-1-P). The sequence is that of 2,3-diketo-5-methylthiopentyl-1-phosphate enolase from Microcystis aeruginosa (strain NIES-843 / IAM M-2473).